The following is a 239-amino-acid chain: ATP-dependent dethiobiotin synthetase BioD (239 aa).

Residue 13–18 (EIGKTV) coordinates ATP. A Mg(2+)-binding site is contributed by threonine 17. Residue lysine 38 is part of the active site. Threonine 42 lines the substrate pocket. Mg(2+)-binding residues include lysine 59 and glutamate 111. ATP-binding positions include 111 to 114 (EGAG), 175 to 176 (NQ), and 204 to 206 (PSL).

The protein belongs to the dethiobiotin synthetase family. As to quaternary structure, homodimer. Requires Mg(2+) as cofactor.

It localises to the cytoplasm. The catalysed reaction is (7R,8S)-7,8-diammoniononanoate + CO2 + ATP = (4R,5S)-dethiobiotin + ADP + phosphate + 3 H(+). It participates in cofactor biosynthesis; biotin biosynthesis; biotin from 7,8-diaminononanoate: step 1/2. In terms of biological role, catalyzes a mechanistically unusual reaction, the ATP-dependent insertion of CO2 between the N7 and N8 nitrogen atoms of 7,8-diaminopelargonic acid (DAPA, also called 7,8-diammoniononanoate) to form a ureido ring. In Geobacillus sp. (strain WCH70), this protein is ATP-dependent dethiobiotin synthetase BioD.